Reading from the N-terminus, the 973-residue chain is Translation initiation factor IF-2 (973 aa).

Basic and acidic residues predominate over residues 97-135; the sequence is GHIDLDGGQHKKQQEEPKAKEEPKVKEEPKVKEEPKVKE. Disordered stretches follow at residues 97–343 and 353–372; these read GHID…EDVQ and LTNKNNKNNKGAKYRRDKRD. Low complexity predominate over residues 136 to 155; it reads APAAPAAQAPVKPAQPAQAP. Composition is skewed to basic and acidic residues over residues 156–175, 183–204, 212–224, and 237–250; these read TEKKEEKVIVVEVEKEKTVE, PKVESVKPEQEVEKTEEKDDNL, LESKIKVTGKIDL, and TKEEKRKERDEKQK. The span at 252 to 266 shows a compositional bias: low complexity; it reads NNNRPGNNSNGPGAP. Basic and acidic residues-rich tracts occupy residues 315–326 and 333–343; these read PNRDDRPNNDRK and VKAEVSEEDVQ. The 171-residue stretch at 472–642 folds into the tr-type G domain; it reads ARPPIVTVMG…LLEADLLDLK (171 aa). Residues 481 to 488 form a G1 region; it reads GHVDHGKT. 481-488 contacts GTP; that stretch reads GHVDHGKT. A G2 region spans residues 506 to 510; it reads GITQH. Residues 528 to 531 form a G3 region; the sequence is DTPG. GTP is bound by residues 528-532 and 582-585; these read DTPGH and NKID. Residues 582–585 form a G4 region; the sequence is NKID. Residues 618-620 form a G5 region; the sequence is SAK.

This sequence belongs to the TRAFAC class translation factor GTPase superfamily. Classic translation factor GTPase family. IF-2 subfamily.

It localises to the cytoplasm. Its function is as follows. One of the essential components for the initiation of protein synthesis. Protects formylmethionyl-tRNA from spontaneous hydrolysis and promotes its binding to the 30S ribosomal subunits. Also involved in the hydrolysis of GTP during the formation of the 70S ribosomal complex. This Parabacteroides distasonis (strain ATCC 8503 / DSM 20701 / CIP 104284 / JCM 5825 / NCTC 11152) protein is Translation initiation factor IF-2.